A 144-amino-acid chain; its full sequence is 3-hydroxyacyl-[acyl-carrier-protein] dehydratase FabZ (144 aa).

H51 is a catalytic residue.

Belongs to the thioester dehydratase family. FabZ subfamily.

It localises to the cytoplasm. It carries out the reaction a (3R)-hydroxyacyl-[ACP] = a (2E)-enoyl-[ACP] + H2O. Its function is as follows. Involved in unsaturated fatty acids biosynthesis. Catalyzes the dehydration of short chain beta-hydroxyacyl-ACPs and long chain saturated and unsaturated beta-hydroxyacyl-ACPs. The protein is 3-hydroxyacyl-[acyl-carrier-protein] dehydratase FabZ of Clostridium botulinum (strain ATCC 19397 / Type A).